The following is a 433-amino-acid chain: Homeobox protein Hox-D3 (433 aa).

3 disordered regions span residues 44 to 198, 258 to 280, and 401 to 433; these read STPH…SKRV, GILHSPAGQSPERSPPLGGAAGH, and HHGPCDPHPTYTDLSAHHSSQGRLPEAPKLTHL. Polar residues predominate over residues 58 to 74; it reads SLDSDYPSSACSIQSSA. Positions 97-106 are enriched in gly residues; the sequence is NSQGGGGGNQ. Residues 116–132 are compositionally biased toward pro residues; that stretch reads PPQPPPPPPPTLPPSSP. Positions 146–159 are enriched in low complexity; that stretch reads GGLSASSSSSTISK. An Antp-type hexapeptide motif is present at residues 161–166; it reads IFPWMK. The span at 171–183 shows a compositional bias: polar residues; the sequence is NSKQKNSCATSGE. Residues 195–254 constitute a DNA-binding region (homeobox); it reads SKRVRTAYTSAQLVELEKEFHFNRYLCRPRRVEMANLLNLTERQIKIWFQNRRMKYKKDQ.

Belongs to the Antp homeobox family. Detected in adult kidney, but not in other adult tissues tested.

Its subcellular location is the nucleus. Sequence-specific transcription factor which is part of a developmental regulatory system that provides cells with specific positional identities on the anterior-posterior axis. The polypeptide is Homeobox protein Hox-D3 (Hoxd3) (Mus musculus (Mouse)).